The primary structure comprises 248 residues: tRNA1(Val) (adenine(37)-N6)-methyltransferase (248 aa).

This sequence belongs to the methyltransferase superfamily. tRNA (adenine-N(6)-)-methyltransferase family.

The protein resides in the cytoplasm. It carries out the reaction adenosine(37) in tRNA1(Val) + S-adenosyl-L-methionine = N(6)-methyladenosine(37) in tRNA1(Val) + S-adenosyl-L-homocysteine + H(+). Its function is as follows. Specifically methylates the adenine in position 37 of tRNA(1)(Val) (anticodon cmo5UAC). This chain is tRNA1(Val) (adenine(37)-N6)-methyltransferase, found in Pectobacterium carotovorum subsp. carotovorum (strain PC1).